We begin with the raw amino-acid sequence, 267 residues long: Cell cycle checkpoint protein RAD1 homolog mrt-2 (267 aa).

It belongs to the Rad1 family. In terms of assembly, probable component of the toroidal 9-1-1 (RAD9-RAD1-HUS1) complex, composed of hpr-9, mrt-2 and hus-1. Interacts with hus-1. Might associate with hpr-9.

It localises to the nucleus. It catalyses the reaction Exonucleolytic cleavage in the 3'- to 5'-direction to yield nucleoside 5'-phosphates.. Its function is as follows. May be a component of the 9-1-1 cell-cycle checkpoint response complex that plays a major role in DNA repair. Promotes DNA double strand break-induced cell cycle arrest and apoptosis, thereby playing a role in genome stability. Also required for telomere length maintenance and germline immortality. May possess 3'-&gt;5' double stranded DNA exonuclease activity. The chain is Cell cycle checkpoint protein RAD1 homolog mrt-2 from Caenorhabditis elegans.